Here is a 113-residue protein sequence, read N- to C-terminus: Endoribonuclease SymE (113 aa).

The 46-residue stretch at 29 to 74 (SRYPDYSRIPAITLKGQWLEAAGFATGTVVDVKVMEGCIVLTAQPP) folds into the SpoVT-AbrB domain.

This sequence belongs to the SymE family.

It is found in the cytoplasm. In terms of biological role, involved in the degradation and recycling of damaged RNA. It is itself a target for degradation by the ATP-dependent protease Lon. In Escherichia coli (strain 55989 / EAEC), this protein is Endoribonuclease SymE.